The chain runs to 143 residues: Protein SLC31A2 (143 aa).

The Extracellular segment spans residues 1–22 (MPMHFIFSDEAVLLFDFWRVHS). A helical membrane pass occupies residues 23 to 43 (PTGMALSVLVVLLLAVLYEGI). Topologically, residues 44–93 (KVGKAKLLHKTLESLPATNSQQFILGPDQDSTGSRSTSDNRTRLRWFLCY) are cytoplasmic. Threonine 75 is subject to Phosphothreonine. Serine 77 carries the post-translational modification Phosphoserine. The chain crosses the membrane as a helical span at residues 94 to 114 (FGQSLVHVIQVVIGYFVMLAV). Topologically, residues 115-119 (MSYNT) are extracellular. A helical transmembrane segment spans residues 120–140 (WIFLGVVLGSAVGYYLAYPLL). The Cytoplasmic segment spans residues 141 to 143 (NMT).

This sequence belongs to the copper transporter (Ctr) (TC 1.A.56) family. SLC31A subfamily. Oligomer. Interacts with SLC31A1; this interaction stabilizes SLC31A2 and protects it from ubiquitination and the subsequent degradation. Ubiquitinated; ubiquitination and the subsequent proteasomal degradation are prevent by SLC31A1 that stabilizes it.

The protein localises to the membrane. The protein resides in the cytoplasmic vesicle membrane. It localises to the late endosome membrane. It is found in the lysosome membrane. Its subcellular location is the recycling endosome membrane. Does not function as a copper(1+) importer in vivo. However, in vitro functions as a low-affinity copper(1+) importer. Regulator of SLC31A1 which facilitates the cleavage of the SLC31A1 ecto-domain or which stabilizes the truncated form of SLC31A1 (Truncated CTR1 form), thereby drives the SLC31A1 truncated form-dependent endosomal copper export and modulates the copper and cisplatin accumulation via SLC31A1. This Mus musculus (Mouse) protein is Protein SLC31A2.